The following is a 642-amino-acid chain: Threonine--tRNA ligase (642 aa).

The 61-residue stretch at 1–61 (MPVITLPDGS…ETDAELSIIT (61 aa)) folds into the TGS domain. Residues 243–534 (DHRKIGKQLD…LIEEYAGRFP (292 aa)) are catalytic. Positions 334, 385, and 511 each coordinate Zn(2+).

The protein belongs to the class-II aminoacyl-tRNA synthetase family. In terms of assembly, homodimer. Zn(2+) serves as cofactor.

It localises to the cytoplasm. The catalysed reaction is tRNA(Thr) + L-threonine + ATP = L-threonyl-tRNA(Thr) + AMP + diphosphate + H(+). Catalyzes the attachment of threonine to tRNA(Thr) in a two-step reaction: L-threonine is first activated by ATP to form Thr-AMP and then transferred to the acceptor end of tRNA(Thr). Also edits incorrectly charged L-seryl-tRNA(Thr). The polypeptide is Threonine--tRNA ligase (Shewanella baltica (strain OS195)).